A 446-amino-acid polypeptide reads, in one-letter code: Glutamine synthetase (446 aa).

Positions 18–103 (ENVRYLRLQF…LICDVFKTDG (86 aa)) constitute a GS beta-grasp domain. The region spanning 110–446 (PRANLKRVLR…WEREQYIKQY (337 aa)) is the GS catalytic domain. Mg(2+) is bound by residues Glu-134 and Glu-136. Glu-186 is an ATP binding site. 2 residues coordinate Mg(2+): Glu-191 and Glu-198. L-glutamate is bound by residues 242 to 243 (NG) and Gly-243. His-247 is a binding site for Mg(2+). Ser-251 provides a ligand contact to ATP. L-glutamate-binding residues include Arg-300, Glu-306, and Arg-318. Residues Arg-318 and Arg-323 each contribute to the ATP site. Mg(2+) is bound at residue Glu-335. Arg-337 is a binding site for L-glutamate.

It belongs to the glutamine synthetase family. Oligomer of 12 subunits arranged in the form of two hexagons. In its feedback-inhibited form, interacts with TnrA in order to block its DNA-binding activity. Mg(2+) is required as a cofactor.

The protein localises to the cytoplasm. The catalysed reaction is L-glutamate + NH4(+) + ATP = L-glutamine + ADP + phosphate + H(+). With respect to regulation, inhibited by glutamine. Its function is as follows. Glutamine synthetase (GS) is an unusual multitasking protein that functions as an enzyme, a transcription coregulator, and a chaperone in ammonium assimilation and in the regulation of genes involved in nitrogen metabolism. It catalyzes the ATP-dependent biosynthesis of glutamine from glutamate and ammonia. Feedback-inhibited GlnA also interacts with and regulates the activity of the transcriptional regulator TnrA. During nitrogen limitation, TnrA is in its DNA-binding active state and turns on the transcription of genes required for nitrogen assimilation. Under conditions of nitrogen excess, feedback-inhibited GlnA forms a stable complex with TnrA, which inhibits its DNA-binding activity. In contrast, feedback-inhibited GlnA acts as a chaperone to stabilize the DNA-binding activity of GlnR, which represses the transcription of nitrogen assimilation genes. The sequence is that of Glutamine synthetase from Staphylococcus epidermidis (strain ATCC 35984 / DSM 28319 / BCRC 17069 / CCUG 31568 / BM 3577 / RP62A).